The following is a 99-amino-acid chain: Small ribosomal subunit protein bS20 (99 aa).

This sequence belongs to the bacterial ribosomal protein bS20 family.

Its function is as follows. Binds directly to 16S ribosomal RNA. The polypeptide is Small ribosomal subunit protein bS20 (Chlamydia pneumoniae (Chlamydophila pneumoniae)).